The following is a 359-amino-acid chain: Prostaglandin D2 receptor (359 aa).

Topologically, residues 1–21 are extracellular; sequence MKSPFYRCQNTTSVEKGNSAV. An N-linked (GlcNAc...) asparagine glycan is attached at N10. A helical membrane pass occupies residues 22 to 42; it reads MGGVLFSTGLLGNLLALGLLA. Over 43 to 59 the chain is Cytoplasmic; the sequence is RSGLGWCSRRPLRPLPS. A helical membrane pass occupies residues 60–80; sequence VFYMLVCGLTVTDLLGKCLLS. Topologically, residues 81 to 107 are extracellular; the sequence is PVVLAAYAQNRSLRVLAPALDNSLCQA. N-linked (GlcNAc...) asparagine glycosylation is present at N90. A disulfide bridge links C105 with C183. A helical membrane pass occupies residues 108 to 128; that stretch reads FAFFMSFFGLSSTLQLLAMAL. Topologically, residues 129–150 are cytoplasmic; the sequence is ECWLSLGHPFFYRRHITLRLGA. The chain crosses the membrane as a helical span at residues 151–171; it reads LVAPVVSAFSLAFCALPFMGF. Residues 172–195 lie on the Extracellular side of the membrane; that stretch reads GKFVQYCPGTWCFIQMVHEEGSLS. A helical membrane pass occupies residues 196 to 216; it reads VLGYSVLYSSLMALLVLATVL. The Cytoplasmic segment spans residues 217–262; that stretch reads CNLGAMRNLYAMHRRLQRHPRSCTRDCAEPRADGREASPQPLEELD. The chain crosses the membrane as a helical span at residues 263-283; that stretch reads HLLLLALMTVLFTMCSLPVIY. The Extracellular segment spans residues 284 to 310; it reads RAYYGAFKDVKEKNRTSEEAEDLRALR. A glycan (N-linked (GlcNAc...) asparagine) is linked at N297. A helical membrane pass occupies residues 311 to 331; it reads FLSVISIVDPWIFIIFRSPVF. Over 332–359 the chain is Cytoplasmic; that stretch reads RIFFHKIFIRPLRYRSRCSNSTNMESSL.

Belongs to the G-protein coupled receptor 1 family. Expressed in retinal choroid, ciliary epithelium, longitudinal and circular ciliary muscles, iris, small intestine and platelet membranes.

The protein resides in the cell membrane. Functionally, receptor for prostaglandin D2 (PGD2). The activity of this receptor is mainly mediated by G(s) proteins that stimulate adenylate cyclase, resulting in an elevation of intracellular cAMP. A mobilization of calcium is also observed, but without formation of inositol 1,4,5-trisphosphate. Involved in PLA2G3-dependent maturation of mast cells. PLA2G3 is secreted by immature mast cells and acts on nearby fibroblasts upstream to PTDGS to synthesize PGD2, which in turn promotes mast cell maturation and degranulation via PTGDR. This chain is Prostaglandin D2 receptor (PTGDR), found in Homo sapiens (Human).